A 318-amino-acid chain; its full sequence is Large ribosomal subunit protein uL10 (318 aa).

Tyr-24 carries the post-translational modification Phosphotyrosine. Residue Thr-59 is modified to Phosphothreonine. Lys-264 is covalently cross-linked (Glycyl lysine isopeptide (Lys-Gly) (interchain with G-Cter in ubiquitin)). Residues 293 to 318 form a disordered region; the sequence is TAAPAKVEAKEESEESDEDMGFGLFD. Residue Lys-298 forms a Glycyl lysine isopeptide (Lys-Gly) (interchain with G-Cter in SUMO1); alternate linkage. Residue Lys-298 forms a Glycyl lysine isopeptide (Lys-Gly) (interchain with G-Cter in SUMO2); alternate linkage. Over residues 303–312 the composition is skewed to acidic residues; the sequence is EESEESDEDM. 2 positions are modified to phosphoserine: Ser-305 and Ser-308.

The protein belongs to the universal ribosomal protein uL10 family. As to quaternary structure, P0 forms a pentameric complex by interaction with dimers of P1 and P2. Identified in a IGF2BP1-dependent mRNP granule complex containing untranslated mRNAs. Interacts with APEX1. Interacts with FMR1. Ubiquitinated at Lys-264 by RNF14 and RNF25 in response to ribosome collisions (ribosome stalling).

The protein localises to the nucleus. The protein resides in the cytoplasm. In terms of biological role, ribosomal protein P0 is the functional equivalent of E.coli protein L10. The sequence is that of Large ribosomal subunit protein uL10 (RPLP0) from Bos taurus (Bovine).